Consider the following 341-residue polypeptide: AB hydrolase superfamily protein C1039.03 (341 aa).

It belongs to the AB hydrolase superfamily.

The protein localises to the cytoplasm. The protein resides in the nucleus. This Schizosaccharomyces pombe (strain 972 / ATCC 24843) (Fission yeast) protein is AB hydrolase superfamily protein C1039.03.